The chain runs to 540 residues: tRNA-2-methylthio-N(6)-dimethylallyladenosine synthase (540 aa).

Residues 4-120 (RSYEVRTFGC…LPVLLERARH (117 aa)) form the MTTase N-terminal domain. [4Fe-4S] cluster contacts are provided by cysteine 13, cysteine 49, cysteine 83, cysteine 157, cysteine 161, and cysteine 164. In terms of domain architecture, Radical SAM core spans 143-374 (RASHHSAWVS…ALQDEISWAE (232 aa)). The 93-residue stretch at 376–468 (RALVGRRVEV…PHHLTADGPL (93 aa)) folds into the TRAM domain. Residues 480-540 (WALGRDGDGG…ADACCTPVRR (61 aa)) are disordered. 2 stretches are compositionally biased toward low complexity: residues 492 to 502 (AAAQQPADGRP) and 520 to 533 (GPAS…GADA).

The protein belongs to the methylthiotransferase family. MiaB subfamily. Monomer. The cofactor is [4Fe-4S] cluster.

The protein resides in the cytoplasm. The catalysed reaction is N(6)-dimethylallyladenosine(37) in tRNA + (sulfur carrier)-SH + AH2 + 2 S-adenosyl-L-methionine = 2-methylsulfanyl-N(6)-dimethylallyladenosine(37) in tRNA + (sulfur carrier)-H + 5'-deoxyadenosine + L-methionine + A + S-adenosyl-L-homocysteine + 2 H(+). Catalyzes the methylthiolation of N6-(dimethylallyl)adenosine (i(6)A), leading to the formation of 2-methylthio-N6-(dimethylallyl)adenosine (ms(2)i(6)A) at position 37 in tRNAs that read codons beginning with uridine. The protein is tRNA-2-methylthio-N(6)-dimethylallyladenosine synthase of Frankia casuarinae (strain DSM 45818 / CECT 9043 / HFP020203 / CcI3).